The primary structure comprises 177 residues: Adenine phosphoribosyltransferase (177 aa).

It belongs to the purine/pyrimidine phosphoribosyltransferase family. Homodimer.

It localises to the cytoplasm. It carries out the reaction AMP + diphosphate = 5-phospho-alpha-D-ribose 1-diphosphate + adenine. It functions in the pathway purine metabolism; AMP biosynthesis via salvage pathway; AMP from adenine: step 1/1. Its function is as follows. Catalyzes a salvage reaction resulting in the formation of AMP, that is energically less costly than de novo synthesis. This chain is Adenine phosphoribosyltransferase, found in Mycobacteroides abscessus (strain ATCC 19977 / DSM 44196 / CCUG 20993 / CIP 104536 / JCM 13569 / NCTC 13031 / TMC 1543 / L948) (Mycobacterium abscessus).